The sequence spans 603 residues: Probable lysosomal cobalamin transporter (603 aa).

A run of 9 helical transmembrane segments spans residues 13–33 (IWVA…ITVF), 50–70 (IVSL…IALV), 99–119 (IVYY…IPFA), 150–170 (IAFI…PTAA), 201–221 (LLMT…LALL), 318–338 (LFGG…MLIT), 353–373 (GYIL…VKAA), 381–401 (ILMA…IASV), and 422–442 (ALLI…YAVV). Asn509 carries N-linked (GlcNAc...) asparagine glycosylation. Residues 512–532 (VFGAIDFWAQFAFLTVFLLVF) form a helical membrane-spanning segment. N-linked (GlcNAc...) asparagine glycosylation occurs at Asn543. The tract at residues 578-603 (AKRTVGGHPNGQGYGTSGTNGTASSR) is disordered. The segment covering 585–595 (HPNGQGYGTSG) has biased composition (gly residues). Asn597 is a glycosylation site (N-linked (GlcNAc...) asparagine).

The protein belongs to the LIMR family. LMBRD1 subfamily.

It is found in the lysosome membrane. Probable lysosomal cobalamin transporter. Required to export cobalamin from lysosomes allowing its conversion to cofactors. The chain is Probable lysosomal cobalamin transporter from Neurospora crassa (strain ATCC 24698 / 74-OR23-1A / CBS 708.71 / DSM 1257 / FGSC 987).